The primary structure comprises 447 residues: Argininosuccinate synthase (447 aa).

Residues 17 to 25 (AFSGGLDTS) and A43 contribute to the ATP site. Y99 is an L-citrulline binding site. Positions 129 and 131 each coordinate ATP. L-aspartate-binding residues include T131, N135, and D136. N135 is a binding site for L-citrulline. Residue D136 participates in ATP binding. Residues R139 and S192 each contribute to the L-citrulline site. ATP is bound at residue D194. T201, E203, and E280 together coordinate L-citrulline.

This sequence belongs to the argininosuccinate synthase family. Type 2 subfamily. Homotetramer.

The protein resides in the cytoplasm. It carries out the reaction L-citrulline + L-aspartate + ATP = 2-(N(omega)-L-arginino)succinate + AMP + diphosphate + H(+). The protein operates within amino-acid biosynthesis; L-arginine biosynthesis; L-arginine from L-ornithine and carbamoyl phosphate: step 2/3. The chain is Argininosuccinate synthase from Janthinobacterium sp. (strain Marseille) (Minibacterium massiliensis).